The sequence spans 236 residues: Large ribosomal subunit protein uL1 (236 aa).

It belongs to the universal ribosomal protein uL1 family. As to quaternary structure, part of the 50S ribosomal subunit.

Functionally, binds directly to 23S rRNA. The L1 stalk is quite mobile in the ribosome, and is involved in E site tRNA release. Its function is as follows. Protein L1 is also a translational repressor protein, it controls the translation of the L11 operon by binding to its mRNA. This Acidobacterium capsulatum (strain ATCC 51196 / DSM 11244 / BCRC 80197 / JCM 7670 / NBRC 15755 / NCIMB 13165 / 161) protein is Large ribosomal subunit protein uL1.